The primary structure comprises 264 residues: Thymidylate synthase (264 aa).

DUMP-binding positions include Arg-21 and Arg-126–Arg-127. Catalysis depends on Cys-146, which acts as the Nucleophile. Residues Arg-166–Asp-169, Asn-177, and His-207–Tyr-209 contribute to the dUMP site. Asp-169 is a binding site for (6R)-5,10-methylene-5,6,7,8-tetrahydrofolate. (6R)-5,10-methylene-5,6,7,8-tetrahydrofolate is bound at residue Ala-263.

Belongs to the thymidylate synthase family. Bacterial-type ThyA subfamily. In terms of assembly, homodimer.

It localises to the cytoplasm. The catalysed reaction is dUMP + (6R)-5,10-methylene-5,6,7,8-tetrahydrofolate = 7,8-dihydrofolate + dTMP. It functions in the pathway pyrimidine metabolism; dTTP biosynthesis. Catalyzes the reductive methylation of 2'-deoxyuridine-5'-monophosphate (dUMP) to 2'-deoxythymidine-5'-monophosphate (dTMP) while utilizing 5,10-methylenetetrahydrofolate (mTHF) as the methyl donor and reductant in the reaction, yielding dihydrofolate (DHF) as a by-product. This enzymatic reaction provides an intracellular de novo source of dTMP, an essential precursor for DNA biosynthesis. The polypeptide is Thymidylate synthase (Bradyrhizobium diazoefficiens (strain JCM 10833 / BCRC 13528 / IAM 13628 / NBRC 14792 / USDA 110)).